Here is a 490-residue protein sequence, read N- to C-terminus: ATP synthase subunit alpha 1 (490 aa).

171 to 178 (GDNGLGKS) serves as a coordination point for ATP.

This sequence belongs to the ATPase alpha/beta chains family. In terms of assembly, F-type ATPases have 2 components, CF(1) - the catalytic core - and CF(0) - the membrane proton channel. CF(1) has five subunits: alpha(3), beta(3), gamma(1), delta(1), epsilon(1). CF(0) has three main subunits: a(1), b(2) and c(9-12). The alpha and beta chains form an alternating ring which encloses part of the gamma chain. CF(1) is attached to CF(0) by a central stalk formed by the gamma and epsilon chains, while a peripheral stalk is formed by the delta and b chains.

It localises to the cell inner membrane. The enzyme catalyses ATP + H2O + 4 H(+)(in) = ADP + phosphate + 5 H(+)(out). In terms of biological role, produces ATP from ADP in the presence of a proton gradient across the membrane. The alpha chain is a regulatory subunit. The protein is ATP synthase subunit alpha 1 of Legionella pneumophila (strain Corby).